The sequence spans 92 residues: UPF0213 protein H16_B0156 (92 aa).

A GIY-YIG domain is found at 5–80 (SAWYLYLLEC…KRLSSTQKRA (76 aa)).

It belongs to the UPF0213 family.

The chain is UPF0213 protein H16_B0156 from Cupriavidus necator (strain ATCC 17699 / DSM 428 / KCTC 22496 / NCIMB 10442 / H16 / Stanier 337) (Ralstonia eutropha).